The following is a 346-amino-acid chain: E3 ubiquitin-protein ligase MARCHF9 (346 aa).

2 disordered regions span residues 20-39 (GGGR…GGCG) and 47-92 (STRD…PGAL). The span at 63–75 (PRARGLAGDKEPR) shows a compositional bias: basic and acidic residues. Positions 77–90 (GPLPPPAPPLPPPG) are enriched in pro residues. An RING-CH-type zinc finger spans residues 102 to 162 (DSGLRTPQCR…ELCYFKYQVL (61 aa)). Zn(2+)-binding residues include Cys-110, Cys-113, Cys-126, Cys-128, His-136, Cys-139, Cys-152, and Cys-155. 2 helical membrane-spanning segments follow: residues 185–205 (IAAI…LIWS) and 219–239 (LFQI…GLII). 2 disordered regions span residues 273–301 (DAGG…RPPA) and 326–346 (PPDA…VTTV). The span at 284–296 (PRNSRTGPTSGAT) shows a compositional bias: polar residues.

As to quaternary structure, homodimer. Ubiquitously expressed.

It is found in the golgi apparatus membrane. Its subcellular location is the lysosome membrane. It carries out the reaction S-ubiquitinyl-[E2 ubiquitin-conjugating enzyme]-L-cysteine + [acceptor protein]-L-lysine = [E2 ubiquitin-conjugating enzyme]-L-cysteine + N(6)-ubiquitinyl-[acceptor protein]-L-lysine.. The protein operates within protein modification; protein ubiquitination. Functionally, E3 ubiquitin-protein ligase that may mediate ubiquitination of MHC-I, CD4 and ICAM1, and promote their subsequent endocytosis and sorting to lysosomes via multivesicular bodies. E3 ubiquitin ligases accept ubiquitin from an E2 ubiquitin-conjugating enzyme in the form of a thioester and then directly transfer the ubiquitin to targeted substrates. The polypeptide is E3 ubiquitin-protein ligase MARCHF9 (Homo sapiens (Human)).